Reading from the N-terminus, the 331-residue chain is Probable staphylococcal-like nuclease CAN1 (331 aa).

G2 carries N-myristoyl glycine lipidation. C10 carries S-palmitoyl cysteine lipidation. One can recognise a TNase-like domain in the interval 136-313 (HTLPVDAKAV…QSGRKGLWAA (178 aa)). A Ca(2+)-binding site is contributed by D149. R220 is a catalytic residue. Position 225 (D225) interacts with Ca(2+). Active-site residues include E228 and R262. The disordered stretch occupies residues 306 to 331 (GRKGLWAASRPQKPWEWRRDKRNGTA). The span at 318–331 (KPWEWRRDKRNGTA) shows a compositional bias: basic and acidic residues.

Belongs to the thermonuclease family. The cofactor is Ca(2+).

It is found in the cell membrane. Enzyme that catalyzes the hydrolysis of both DNA and RNA at the 5' position of the phosphodiester bond. The polypeptide is Probable staphylococcal-like nuclease CAN1 (Oryza sativa subsp. japonica (Rice)).